The sequence spans 304 residues: MDLLTLWNLEREEVLKIIENAEYFKKNRYGHDILKNKSIALIFESPSTRTRMSFDLAVHELGGHSLMMNEGEIHLGKKESIADTARVMSRFVDAIVARVKSHKTLEDLAEYGSVPVINALCDLAHPCQILADLLTMKENGKNFKGLKLAYFGDGNNVSNSLMIAGAILGMDVVIATPRSYEPSGLFVKKALEIIAKYGEGSLTLTDDPEIAAKDADVLYTDVWISMSDKNKNLDEILKIFPKFQINAELLSKAKEDAIVLHCLPANRGLEITDEVIDGKQSKVFDQAENRLHAQKAVLKYIFEH.

Carbamoyl phosphate is bound by residues 47 to 50 (STRT), arginine 98, and 125 to 128 (HPCQ). Residues asparagine 156, aspartate 221, and 225-226 (SM) contribute to the L-ornithine site. Carbamoyl phosphate is bound by residues 262 to 263 (CL) and arginine 290.

It belongs to the aspartate/ornithine carbamoyltransferase superfamily. OTCase family.

It localises to the cytoplasm. The enzyme catalyses carbamoyl phosphate + L-ornithine = L-citrulline + phosphate + H(+). The protein operates within amino-acid biosynthesis; L-arginine biosynthesis; L-arginine from L-ornithine and carbamoyl phosphate: step 1/3. Reversibly catalyzes the transfer of the carbamoyl group from carbamoyl phosphate (CP) to the N(epsilon) atom of ornithine (ORN) to produce L-citrulline. This chain is Ornithine carbamoyltransferase, found in Methanococcus maripaludis (strain C7 / ATCC BAA-1331).